Reading from the N-terminus, the 235-residue chain is MAAKLPTVVLLASFAAVILSLAAPLLAGDPDMLQDICVADYKSLQGPLRVNGFPCKPEANVTAEDFFFPGLGKPADVYSGNPMGSAVTAATVERIPGLNTLGVSMARVDYAPWGGANPPHSHPRATEILFVADGLLEVGFVVATAAPASSRLITRVVPKGGVFVFPRGLLHYERSVGEKPAVAISAFDSQLPGTQAAADALFGSSSPAVPTDVLARAFQVDGGVVENIKSKFQHK.

The N-terminal stretch at 1 to 27 is a signal peptide; sequence MAAKLPTVVLLASFAAVILSLAAPLLA. C37 and C55 are disulfide-bonded. N-linked (GlcNAc...) asparagine glycosylation occurs at N60. Positions 69–226 constitute a Cupin type-1 domain; that stretch reads PGLGKPADVY…AFQVDGGVVE (158 aa). Residues H120, H122, E127, and H171 each coordinate Mn(2+).

It belongs to the germin family. As to quaternary structure, oligomer (believed to be a pentamer but probably hexamer).

It localises to the secreted. It is found in the extracellular space. The protein localises to the apoplast. Functionally, may play a role in plant defense. Probably has no oxalate oxidase activity even if the active site is conserved. This chain is Germin-like protein 1-4, found in Oryza sativa subsp. japonica (Rice).